We begin with the raw amino-acid sequence, 81 residues long: Small ribosomal subunit protein eS21 (81 aa).

Belongs to the eukaryotic ribosomal protein eS21 family. As to quaternary structure, component of the 40S small ribosomal subunit.

The protein resides in the cytoplasm. Its subcellular location is the cytosol. It localises to the rough endoplasmic reticulum. Component of the small ribosomal subunit. The ribosome is a large ribonucleoprotein complex responsible for the synthesis of proteins in the cell. The sequence is that of Small ribosomal subunit protein eS21 (rps21) from Danio rerio (Zebrafish).